The chain runs to 230 residues: tRNA (guanine-N(7)-)-methyltransferase (230 aa).

The S-adenosyl-L-methionine site is built by Glu61, Glu86, Asp113, and Asp135. Residue Asp135 is part of the active site. Residues Lys139, Asp171, and 209–212 (TRYE) contribute to the substrate site.

Belongs to the class I-like SAM-binding methyltransferase superfamily. TrmB family.

It catalyses the reaction guanosine(46) in tRNA + S-adenosyl-L-methionine = N(7)-methylguanosine(46) in tRNA + S-adenosyl-L-homocysteine. Its pathway is tRNA modification; N(7)-methylguanine-tRNA biosynthesis. In terms of biological role, catalyzes the formation of N(7)-methylguanine at position 46 (m7G46) in tRNA. This Azorhizobium caulinodans (strain ATCC 43989 / DSM 5975 / JCM 20966 / LMG 6465 / NBRC 14845 / NCIMB 13405 / ORS 571) protein is tRNA (guanine-N(7)-)-methyltransferase.